We begin with the raw amino-acid sequence, 215 residues long: Glycerol-3-phosphate acyltransferase (215 aa).

6 helical membrane-spanning segments follow: residues Leu-3–Gly-23, Thr-42–Ile-61, Thr-68–Leu-90, Ala-110–Leu-130, Leu-134–Leu-154, and Leu-162–Ile-182.

The protein belongs to the PlsY family. As to quaternary structure, probably interacts with PlsX.

It localises to the cell membrane. It carries out the reaction an acyl phosphate + sn-glycerol 3-phosphate = a 1-acyl-sn-glycero-3-phosphate + phosphate. It participates in lipid metabolism; phospholipid metabolism. Catalyzes the transfer of an acyl group from acyl-phosphate (acyl-PO(4)) to glycerol-3-phosphate (G3P) to form lysophosphatidic acid (LPA). This enzyme utilizes acyl-phosphate as fatty acyl donor, but not acyl-CoA or acyl-ACP. This chain is Glycerol-3-phosphate acyltransferase, found in Streptococcus equi subsp. zooepidemicus (strain H70).